We begin with the raw amino-acid sequence, 211 residues long: Probable septum site-determining protein MinC (211 aa).

The protein belongs to the MinC family. In terms of assembly, interacts with MinD and FtsZ.

Functionally, cell division inhibitor that blocks the formation of polar Z ring septums. Rapidly oscillates between the poles of the cell to destabilize FtsZ filaments that have formed before they mature into polar Z rings. Prevents FtsZ polymerization. In Clostridium perfringens (strain 13 / Type A), this protein is Probable septum site-determining protein MinC.